A 294-amino-acid chain; its full sequence is Uracil-DNA glycosylase (294 aa).

Aspartate 139 (proton acceptor) is an active-site residue.

This sequence belongs to the uracil-DNA glycosylase (UDG) superfamily. UNG family.

The protein localises to the host nucleus. It carries out the reaction Hydrolyzes single-stranded DNA or mismatched double-stranded DNA and polynucleotides, releasing free uracil.. Excises uracil residues from the DNA which can arise as a result of misincorporation of dUMP residues by DNA polymerase or deamination of cytosines. Therefore may reduce deleterious uracil incorporation into the viral genome, particularly in terminally differentiated cells which lack DNA repair enzymes. The chain is Uracil-DNA glycosylase (UL2) from Human herpesvirus 2 (strain 333) (HHV-2).